The chain runs to 913 residues: DNA mismatch repair protein MutS (913 aa).

Residues 18–50 form a disordered region; the sequence is NNKQKEKTKIPEDLSLEDLKKESQKRPRQRKNS. Residues 19 to 42 are compositionally biased toward basic and acidic residues; sequence NKQKEKTKIPEDLSLEDLKKESQK. 720 to 727 contacts ATP; the sequence is GPNASGKS.

It belongs to the DNA mismatch repair MutS family.

Its function is as follows. This protein is involved in the repair of mismatches in DNA. It is possible that it carries out the mismatch recognition step. This protein has a weak ATPase activity. The chain is DNA mismatch repair protein MutS from Prochlorococcus marinus (strain MIT 9301).